A 191-amino-acid chain; its full sequence is Elongation factor P (191 aa).

Belongs to the elongation factor P family.

It localises to the cytoplasm. The protein operates within protein biosynthesis; polypeptide chain elongation. Functionally, involved in peptide bond synthesis. Stimulates efficient translation and peptide-bond synthesis on native or reconstituted 70S ribosomes in vitro. Probably functions indirectly by altering the affinity of the ribosome for aminoacyl-tRNA, thus increasing their reactivity as acceptors for peptidyl transferase. The sequence is that of Elongation factor P from Ralstonia pickettii (strain 12J).